We begin with the raw amino-acid sequence, 242 residues long: Tyrosine recombinase XerD-like (242 aa).

One can recognise a Core-binding (CB) domain in the interval 1 to 71; that stretch reads MKEAIDQFIQ…AVNQFLYFLY (71 aa). A Tyr recombinase domain is found at 90-242; sequence ENSSQGSLLD…KSITTLEKYR (153 aa). Catalysis depends on residues K148 and R209. The active-site O-(3'-phospho-DNA)-tyrosine intermediate is the Y241.

It belongs to the 'phage' integrase family. XerD-like subfamily.

The protein resides in the cytoplasm. Putative tyrosine recombinase. Not involved in the cutting and rejoining of the recombining DNA molecules on dif(SL) site. The polypeptide is Tyrosine recombinase XerD-like (Streptococcus gordonii (strain Challis / ATCC 35105 / BCRC 15272 / CH1 / DL1 / V288)).